Here is a 153-residue protein sequence, read N- to C-terminus: Ribosome maturation factor RimP (153 aa).

This sequence belongs to the RimP family.

It is found in the cytoplasm. Required for maturation of 30S ribosomal subunits. In Clostridium botulinum (strain 657 / Type Ba4), this protein is Ribosome maturation factor RimP.